A 235-amino-acid chain; its full sequence is Protocatechuate 3,4-dioxygenase beta chain (235 aa).

Residues tyrosine 107, tyrosine 146, histidine 159, and histidine 161 each coordinate Fe cation.

The protein belongs to the intradiol ring-cleavage dioxygenase family. As to quaternary structure, the enzyme is an oligomer of 12 copies of the alpha and beta chains. It depends on Fe(3+) as a cofactor.

The enzyme catalyses 3,4-dihydroxybenzoate + O2 = 3-carboxy-cis,cis-muconate + 2 H(+). It participates in aromatic compound metabolism; beta-ketoadipate pathway; 3-carboxy-cis,cis-muconate from 3,4-dihydroxybenzoate: step 1/1. Functionally, plays an essential role in the utilization of numerous aromatic and hydroaromatic compounds via the beta-ketoadipate pathway. The sequence is that of Protocatechuate 3,4-dioxygenase beta chain (pcaH) from Burkholderia cepacia (Pseudomonas cepacia).